Consider the following 162-residue polypeptide: MEIQGTRFGTLEFDEKEIIYLNEGLLGFPLSKQFLMFPYGEDSSFFWLQSVDEPEIAFIVINPFDFFSDLEFAVEDEDASSLVLARSEDVEIFTLVTIPEGRPEEMRTNLAGPVVVNVQNRLGKQILCKDYSPRQPLIPDSMRSQLKEQARSSKGGHVAGGR.

It belongs to the FliW family. Interacts with translational regulator CsrA and flagellin(s).

It localises to the cytoplasm. Acts as an anti-CsrA protein, binds CsrA and prevents it from repressing translation of its target genes, one of which is flagellin. Binds to flagellin and participates in the assembly of the flagellum. The polypeptide is Flagellar assembly factor FliW (Magnetococcus marinus (strain ATCC BAA-1437 / JCM 17883 / MC-1)).